The following is a 330-amino-acid chain: Tryptophan--tRNA ligase (330 aa).

ATP is bound by residues 10–12 (QPS) and 18–19 (GN). The 'HIGH' region motif lies at 11–19 (PSGTLTLGN). D133 lines the L-tryptophan pocket. ATP contacts are provided by residues 145 to 147 (GED), I184, and 193 to 197 (KMSKS). The 'KMSKS' region motif lies at 193 to 197 (KMSKS).

It belongs to the class-I aminoacyl-tRNA synthetase family. In terms of assembly, homodimer.

The protein resides in the cytoplasm. It carries out the reaction tRNA(Trp) + L-tryptophan + ATP = L-tryptophyl-tRNA(Trp) + AMP + diphosphate + H(+). Catalyzes the attachment of tryptophan to tRNA(Trp). In Halalkalibacterium halodurans (strain ATCC BAA-125 / DSM 18197 / FERM 7344 / JCM 9153 / C-125) (Bacillus halodurans), this protein is Tryptophan--tRNA ligase.